We begin with the raw amino-acid sequence, 316 residues long: CD276 antigen (316 aa).

The N-terminal stretch at 1-28 (MLRGWGGPSVGVSMGTALGVLCLCLTGA) is a signal peptide. One can recognise an Ig-like V-type domain in the interval 29–139 (VEVQVSEDPV…DSAAVSLQVA (111 aa)). Over 29-248 (VEVQVSEDPV…GQPMTFPPEA (220 aa)) the chain is Extracellular. N-linked (GlcNAc...) asparagine glycans are attached at residues Asn104, Asn189, and Asn215. The Ig-like C2-type domain occupies 145–238 (PSMTLEPNKD…QDAHGSVTIT (94 aa)). A disulfide bridge connects residues Cys165 and Cys220. The chain crosses the membrane as a helical span at residues 249 to 269 (LWVTVGLSVCLVILLVALAFV). Topologically, residues 270-316 (CWRKIKQSCEEENAGAEDQDGDGEGSKTALRPLKHSENKEDDGQEIA) are cytoplasmic. The segment covering 281-292 (ENAGAEDQDGDG) has biased composition (acidic residues). Residues 281–316 (ENAGAEDQDGDGEGSKTALRPLKHSENKEDDGQEIA) form a disordered region.

It belongs to the immunoglobulin superfamily. BTN/MOG family. As to quaternary structure, interacts with TREML2 and this interaction enhances T-cell activation.

The protein resides in the membrane. In terms of biological role, modulates T-cell-mediated immune responses and the development of acute and chronic transplant rejection. May play a positive regulatory role in bone formation and has a dual role in the bone-immune interface. Induces antitumor immunity as it activates both acquired and innate immunity leading to natural killer cell and CD8 T-cell dependent killing of tumor cells. This is CD276 antigen (Cd276) from Rattus norvegicus (Rat).